A 150-amino-acid polypeptide reads, in one-letter code: D-aminoacyl-tRNA deacylase (150 aa).

A Gly-cisPro motif, important for rejection of L-amino acids motif is present at residues G138–P139.

It belongs to the DTD family. As to quaternary structure, homodimer.

Its subcellular location is the cytoplasm. It carries out the reaction glycyl-tRNA(Ala) + H2O = tRNA(Ala) + glycine + H(+). The catalysed reaction is a D-aminoacyl-tRNA + H2O = a tRNA + a D-alpha-amino acid + H(+). Its function is as follows. An aminoacyl-tRNA editing enzyme that deacylates mischarged D-aminoacyl-tRNAs. Also deacylates mischarged glycyl-tRNA(Ala), protecting cells against glycine mischarging by AlaRS. Acts via tRNA-based rather than protein-based catalysis; rejects L-amino acids rather than detecting D-amino acids in the active site. By recycling D-aminoacyl-tRNA to D-amino acids and free tRNA molecules, this enzyme counteracts the toxicity associated with the formation of D-aminoacyl-tRNA entities in vivo and helps enforce protein L-homochirality. In Parabacteroides distasonis (strain ATCC 8503 / DSM 20701 / CIP 104284 / JCM 5825 / NCTC 11152), this protein is D-aminoacyl-tRNA deacylase.